Reading from the N-terminus, the 337-residue chain is Thiazole synthase (337 aa).

The tract at residues Met-1–Ala-41 is disordered. A compositionally biased stretch (low complexity) spans Gly-10 to Gly-25. Residues Leu-26–Ala-41 are compositionally biased toward gly residues. The active-site Schiff-base intermediate with DXP is Lys-144. 1-deoxy-D-xylulose 5-phosphate-binding positions include Gly-205, Ala-231–Gly-232, and Asn-253–Thr-254. Positions Phe-302–Arg-337 are disordered. Residues Val-319–Arg-337 are compositionally biased toward low complexity.

This sequence belongs to the ThiG family. As to quaternary structure, homotetramer. Forms heterodimers with either ThiH or ThiS.

Its subcellular location is the cytoplasm. The catalysed reaction is [ThiS sulfur-carrier protein]-C-terminal-Gly-aminoethanethioate + 2-iminoacetate + 1-deoxy-D-xylulose 5-phosphate = [ThiS sulfur-carrier protein]-C-terminal Gly-Gly + 2-[(2R,5Z)-2-carboxy-4-methylthiazol-5(2H)-ylidene]ethyl phosphate + 2 H2O + H(+). The protein operates within cofactor biosynthesis; thiamine diphosphate biosynthesis. In terms of biological role, catalyzes the rearrangement of 1-deoxy-D-xylulose 5-phosphate (DXP) to produce the thiazole phosphate moiety of thiamine. Sulfur is provided by the thiocarboxylate moiety of the carrier protein ThiS. In vitro, sulfur can be provided by H(2)S. The chain is Thiazole synthase from Frankia casuarinae (strain DSM 45818 / CECT 9043 / HFP020203 / CcI3).